A 208-amino-acid polypeptide reads, in one-letter code: Octanoyltransferase (208 aa).

The BPL/LPL catalytic domain maps to 30–208 (GTASEAVFIL…ILKQEFYKIF (179 aa)). Substrate is bound by residues 69–76 (RGGKFTYH), 142–144 (SIG), and 155–157 (GVA). The active-site Acyl-thioester intermediate is Cys-173.

It belongs to the LipB family.

The protein localises to the cytoplasm. The enzyme catalyses octanoyl-[ACP] + L-lysyl-[protein] = N(6)-octanoyl-L-lysyl-[protein] + holo-[ACP] + H(+). It functions in the pathway protein modification; protein lipoylation via endogenous pathway; protein N(6)-(lipoyl)lysine from octanoyl-[acyl-carrier-protein]: step 1/2. Catalyzes the transfer of endogenously produced octanoic acid from octanoyl-acyl-carrier-protein onto the lipoyl domains of lipoate-dependent enzymes. Lipoyl-ACP can also act as a substrate although octanoyl-ACP is likely to be the physiological substrate. In Orientia tsutsugamushi (strain Boryong) (Rickettsia tsutsugamushi), this protein is Octanoyltransferase.